A 717-amino-acid polypeptide reads, in one-letter code: Fatty acid oxidation complex subunit alpha (717 aa).

Residues 1-189 (MIYQSPTIEV…NVGAIDALVA (189 aa)) form an enoyl-CoA hydratase/isomerase region. Aspartate 296 serves as a coordination point for substrate. The segment at 311–717 (KKVNSAAVLG…ANNGSYYQQA (407 aa)) is 3-hydroxyacyl-CoA dehydrogenase. NAD(+) is bound by residues methionine 324, aspartate 343, 400-402 (VVE), lysine 407, and serine 429. The For 3-hydroxyacyl-CoA dehydrogenase activity role is filled by histidine 450. Asparagine 453 lines the NAD(+) pocket. Residues asparagine 500 and tyrosine 660 each contribute to the substrate site.

In the N-terminal section; belongs to the enoyl-CoA hydratase/isomerase family. The protein in the C-terminal section; belongs to the 3-hydroxyacyl-CoA dehydrogenase family. Heterotetramer of two alpha chains (FadB) and two beta chains (FadA).

It carries out the reaction a (3S)-3-hydroxyacyl-CoA + NAD(+) = a 3-oxoacyl-CoA + NADH + H(+). It catalyses the reaction a (3S)-3-hydroxyacyl-CoA = a (2E)-enoyl-CoA + H2O. The enzyme catalyses a 4-saturated-(3S)-3-hydroxyacyl-CoA = a (3E)-enoyl-CoA + H2O. The catalysed reaction is (3S)-3-hydroxybutanoyl-CoA = (3R)-3-hydroxybutanoyl-CoA. It carries out the reaction a (3Z)-enoyl-CoA = a 4-saturated (2E)-enoyl-CoA. It catalyses the reaction a (3E)-enoyl-CoA = a 4-saturated (2E)-enoyl-CoA. It functions in the pathway lipid metabolism; fatty acid beta-oxidation. Involved in the aerobic and anaerobic degradation of long-chain fatty acids via beta-oxidation cycle. Catalyzes the formation of 3-oxoacyl-CoA from enoyl-CoA via L-3-hydroxyacyl-CoA. It can also use D-3-hydroxyacyl-CoA and cis-3-enoyl-CoA as substrate. This Shewanella piezotolerans (strain WP3 / JCM 13877) protein is Fatty acid oxidation complex subunit alpha.